Here is a 510-residue protein sequence, read N- to C-terminus: Probable inorganic carbon transporter subunit DabB (510 aa).

14 helical membrane-spanning segments follow: residues 9–29, 37–57, 68–88, 105–122, 125–145, 158–178, 204–224, 226–246, 266–286, 303–323, 355–375, 382–402, 410–430, and 446–466; these read TLLT…LLFL, FVHI…LALV, WHLD…GLII, YFAL…AWLS, LRFM…LIGL, ISGY…IWLF, TGIN…WPFQ, WLIE…AGLV, QIIL…ISLV, GFML…HLIL, LWMI…WFIT, LVSA…LVVF, IAGL…HNSL, and APAV…CTFV.

It belongs to the inorganic carbon transporter (TC 9.A.2) DabB family. Forms a complex with DabA.

The protein resides in the cell membrane. Functionally, part of an energy-coupled inorganic carbon pump. Expression of both dabA and dabB (DA2) restores growth in ambient air to E.coli deleted of its carbonic anhydrase genes (called CAfree, deletion of 'can' and 'cynT'). The sequence is that of Probable inorganic carbon transporter subunit DabB from Bacillus anthracis.